Consider the following 170-residue polypeptide: Peptide deformylase (170 aa).

Residues Cys-91 and His-133 each contribute to the Fe cation site. Glu-134 is a catalytic residue. His-137 is a binding site for Fe cation.

Belongs to the polypeptide deformylase family. Fe(2+) serves as cofactor.

The enzyme catalyses N-terminal N-formyl-L-methionyl-[peptide] + H2O = N-terminal L-methionyl-[peptide] + formate. In terms of biological role, removes the formyl group from the N-terminal Met of newly synthesized proteins. Requires at least a dipeptide for an efficient rate of reaction. N-terminal L-methionine is a prerequisite for activity but the enzyme has broad specificity at other positions. The chain is Peptide deformylase from Aeromonas salmonicida (strain A449).